The following is a 185-amino-acid chain: Elongation factor P (185 aa).

The protein belongs to the elongation factor P family.

It localises to the cytoplasm. The protein operates within protein biosynthesis; polypeptide chain elongation. Functionally, involved in peptide bond synthesis. Stimulates efficient translation and peptide-bond synthesis on native or reconstituted 70S ribosomes in vitro. Probably functions indirectly by altering the affinity of the ribosome for aminoacyl-tRNA, thus increasing their reactivity as acceptors for peptidyl transferase. In Petrotoga mobilis (strain DSM 10674 / SJ95), this protein is Elongation factor P.